The following is a 201-amino-acid chain: Recombination protein RecR (201 aa).

The segment at 60–75 (CSVCGNVDTTDPCSIC) adopts a C4-type zinc-finger fold. The Toprim domain occupies 83–178 (TTIIVVEDVA…KITRLAHGVP (96 aa)).

Belongs to the RecR family.

In terms of biological role, may play a role in DNA repair. It seems to be involved in an RecBC-independent recombinational process of DNA repair. It may act with RecF and RecO. The polypeptide is Recombination protein RecR (Bartonella quintana (strain Toulouse) (Rochalimaea quintana)).